The following is a 55-amino-acid chain: Conotoxin Cal22c (55 aa).

The propeptide occupies 1–5; it reads GRPSA.

In terms of processing, contains 4 disulfide bonds. In terms of tissue distribution, expressed by the venom duct.

It is found in the secreted. In terms of biological role, probable neurotoxin with unknown target. Possibly targets ion channels. The sequence is that of Conotoxin Cal22c from Californiconus californicus (California cone).